The sequence spans 212 residues: Secreted and transmembrane protein 1b (212 aa).

An N-terminal signal peptide occupies residues 1–28 (MLAYSVTSSGLFPRMLWALLLLAASLNA). At 29 to 160 (HNDVWDEPCC…DKPPTAVRTE (132 aa)) the chain is on the extracellular side. Cysteine 38 and cysteine 55 are disulfide-bonded. Residues asparagine 56, asparagine 85, asparagine 114, and asparagine 130 are each glycosylated (N-linked (GlcNAc...) asparagine). The chain crosses the membrane as a helical span at residues 161-181 (VIIIIAIATTIIITGIGVFVW). At 182–212 (YKQFPVAPQIQMSVPCLIHGSPGIPYLTLPP) the chain is on the cytoplasmic side.

Belongs to the SECTM family. As to quaternary structure, interacts with CD7.

The protein localises to the cell membrane. The protein resides in the secreted. Functionally, may be involved in thymocyte signaling. This Mus musculus (Mouse) protein is Secreted and transmembrane protein 1b (Sectm1b).